The primary structure comprises 159 residues: Phosphopantetheine adenylyltransferase (159 aa).

Serine 8 lines the substrate pocket. Residues 8-9 and histidine 16 each bind ATP; that span reads SF. Positions 40, 72, and 86 each coordinate substrate. ATP contacts are provided by residues 87–89, glutamate 97, and 122–128; these read GLR and YSFLSSS.

It belongs to the bacterial CoaD family. Homohexamer. Requires Mg(2+) as cofactor.

It localises to the cytoplasm. It catalyses the reaction (R)-4'-phosphopantetheine + ATP + H(+) = 3'-dephospho-CoA + diphosphate. Its pathway is cofactor biosynthesis; coenzyme A biosynthesis; CoA from (R)-pantothenate: step 4/5. Reversibly transfers an adenylyl group from ATP to 4'-phosphopantetheine, yielding dephospho-CoA (dPCoA) and pyrophosphate. The polypeptide is Phosphopantetheine adenylyltransferase (Synechocystis sp. (strain ATCC 27184 / PCC 6803 / Kazusa)).